Here is a 96-residue protein sequence, read N- to C-terminus: (4S)-4-hydroxy-5-phosphonooxypentane-2,3-dione isomerase (96 aa).

Residues His-2–Phe-91 enclose the ABM domain.

The protein belongs to the LsrG family. As to quaternary structure, homodimer.

The protein resides in the cytoplasm. The catalysed reaction is (2S)-2-hydroxy-3,4-dioxopentyl phosphate = 3-hydroxy-2,4-dioxopentyl phosphate. Involved in the degradation of phospho-AI-2, thereby terminating induction of the lsr operon and closing the AI-2 signaling cycle. Catalyzes the conversion of (4S)-4-hydroxy-5-phosphonooxypentane-2,3-dione (P-DPD) to 3-hydroxy-5-phosphonooxypentane-2,4-dione (P-HPD). This is (4S)-4-hydroxy-5-phosphonooxypentane-2,3-dione isomerase from Escherichia coli O157:H7.